A 178-amino-acid chain; its full sequence is CCHC-type zinc finger nucleic acid binding protein (178 aa).

Ser2 is modified (N-acetylserine). Residues Asn4–Thr21 form a CCHC-type 1 zinc finger. Lys8 bears the N6-acetyllysine mark. Omega-N-methylarginine; by PRMT1 is present on residues Arg25 and Arg27. An RNA-binding Arg/Gly-rich region (RGG-box) region spans residues Arg25 to Thr38. 2 positions are modified to omega-N-methylarginine: Arg32 and Arg34. Position 49 is a phosphoserine (Ser49). 6 consecutive CCHC-type zinc fingers follow at residues Asp52–Leu69, Asp72–Glu90, Gln97–His114, Gln118–Lys135, Val136–Lys153, and Val157–Ile174. An omega-N-methylarginine mark is found at Asp72, Gly79, and Arg80.

As to quaternary structure, associates with the 40S ribosomal subunit, the 80S ribosome and with polysomes. In terms of processing, arginine methylation by PRMT1 in the Arg/Gly-rich region impedes RNA binding.

Its subcellular location is the nucleus. The protein resides in the cytoplasm. The protein localises to the endoplasmic reticulum. Single-stranded DNA-binding protein that preferentially binds to the sterol regulatory element (SRE) sequence 5'-GTGCGGTG-3', and thereby mediates transcriptional repression. Has a role as transactivator of the Myc promoter. Binds single-stranded RNA in a sequence-specific manner. Binds G-rich elements in target mRNA coding sequences. Prevents G-quadruplex structure formation in vitro, suggesting a role in supporting translation by resolving stable structures on mRNAs. The polypeptide is CCHC-type zinc finger nucleic acid binding protein (Mus musculus (Mouse)).